Reading from the N-terminus, the 375-residue chain is Succinyl-diaminopimelate desuccinylase (375 aa).

His66 serves as a coordination point for Zn(2+). Asp68 is an active-site residue. Asp99 contacts Zn(2+). Glu133 serves as the catalytic Proton acceptor. Glu134, Glu162, and His348 together coordinate Zn(2+).

Belongs to the peptidase M20A family. DapE subfamily. As to quaternary structure, homodimer. Zn(2+) is required as a cofactor. It depends on Co(2+) as a cofactor.

The enzyme catalyses N-succinyl-(2S,6S)-2,6-diaminopimelate + H2O = (2S,6S)-2,6-diaminopimelate + succinate. It functions in the pathway amino-acid biosynthesis; L-lysine biosynthesis via DAP pathway; LL-2,6-diaminopimelate from (S)-tetrahydrodipicolinate (succinylase route): step 3/3. Catalyzes the hydrolysis of N-succinyl-L,L-diaminopimelic acid (SDAP), forming succinate and LL-2,6-diaminopimelate (DAP), an intermediate involved in the bacterial biosynthesis of lysine and meso-diaminopimelic acid, an essential component of bacterial cell walls. In Citrobacter koseri (strain ATCC BAA-895 / CDC 4225-83 / SGSC4696), this protein is Succinyl-diaminopimelate desuccinylase.